The sequence spans 252 residues: 5'-methylthioadenosine/S-adenosylhomocysteine nucleosidase (252 aa).

Catalysis depends on E20, which acts as the Proton acceptor. Substrate is bound by residues G86, I160, and 181–182; that span reads ME. The Proton donor role is filled by D205.

This sequence belongs to the PNP/UDP phosphorylase family. MtnN subfamily. Homodimer.

It catalyses the reaction S-adenosyl-L-homocysteine + H2O = S-(5-deoxy-D-ribos-5-yl)-L-homocysteine + adenine. The catalysed reaction is S-methyl-5'-thioadenosine + H2O = 5-(methylsulfanyl)-D-ribose + adenine. It carries out the reaction 5'-deoxyadenosine + H2O = 5-deoxy-D-ribose + adenine. It participates in amino-acid biosynthesis; L-methionine biosynthesis via salvage pathway; S-methyl-5-thio-alpha-D-ribose 1-phosphate from S-methyl-5'-thioadenosine (hydrolase route): step 1/2. Functionally, catalyzes the irreversible cleavage of the glycosidic bond in both 5'-methylthioadenosine (MTA) and S-adenosylhomocysteine (SAH/AdoHcy) to adenine and the corresponding thioribose, 5'-methylthioribose and S-ribosylhomocysteine, respectively. Also cleaves 5'-deoxyadenosine, a toxic by-product of radical S-adenosylmethionine (SAM) enzymes, into 5-deoxyribose and adenine. Thus, is required for in vivo function of the radical SAM enzymes biotin synthase and lipoic acid synthase, that are inhibited by 5'-deoxyadenosine accumulation. The polypeptide is 5'-methylthioadenosine/S-adenosylhomocysteine nucleosidase (Buchnera aphidicola subsp. Baizongia pistaciae (strain Bp)).